Consider the following 573-residue polypeptide: Putative ATP-dependent RNA helicase R563 (573 aa).

A Helicase ATP-binding domain is found at 57 to 233 (INPKTPYKGL…ALTMNLLVRN (177 aa)). 70-77 (HRIGAGKT) provides a ligand contact to ATP. Positions 179-182 (DEVH) match the DEAH box motif. The Helicase C-terminal domain maps to 374-551 (KILRKIKRCN…AFEKALKEAA (178 aa)).

This sequence belongs to the DEAD box helicase family. DEAH subfamily.

It is found in the virion. It carries out the reaction ATP + H2O = ADP + phosphate + H(+). This is Putative ATP-dependent RNA helicase R563 from Acanthamoeba polyphaga mimivirus (APMV).